The following is a 261-amino-acid chain: 1-(5-phosphoribosyl)-5-[(5-phosphoribosylamino)methylideneamino] imidazole-4-carboxamide isomerase (261 aa).

Catalysis depends on aspartate 15, which acts as the Proton acceptor. Residue aspartate 136 is the Proton donor of the active site.

The protein belongs to the HisA/HisF family.

It is found in the cytoplasm. It carries out the reaction 1-(5-phospho-beta-D-ribosyl)-5-[(5-phospho-beta-D-ribosylamino)methylideneamino]imidazole-4-carboxamide = 5-[(5-phospho-1-deoxy-D-ribulos-1-ylimino)methylamino]-1-(5-phospho-beta-D-ribosyl)imidazole-4-carboxamide. It functions in the pathway amino-acid biosynthesis; L-histidine biosynthesis; L-histidine from 5-phospho-alpha-D-ribose 1-diphosphate: step 4/9. The sequence is that of 1-(5-phosphoribosyl)-5-[(5-phosphoribosylamino)methylideneamino] imidazole-4-carboxamide isomerase from Synechococcus sp. (strain JA-3-3Ab) (Cyanobacteria bacterium Yellowstone A-Prime).